The following is a 158-amino-acid chain: MLP-like protein 43 (158 aa).

Alanine 2 is subject to N-acetylalanine.

It belongs to the MLP family.

This is MLP-like protein 43 (MLP43) from Arabidopsis thaliana (Mouse-ear cress).